The following is a 463-amino-acid chain: Interferon-inducible GTPase 5 (463 aa).

Residues 52–234 (TRLEVGVTGE…PMLVTTWEHD (183 aa)) enclose the IRG-type G domain. GTP is bound by residues 61-68 (ESGAGKSS), 86-90 (TGVVE), 168-170 (KVD), and 215-217 (SNL). Phosphoserine occurs at positions 246 and 303. Residues 409 to 438 (QGEVSLEAAGDNAVEKRSSGEGTSEEAPLS) are disordered.

The protein belongs to the TRAFAC class dynamin-like GTPase superfamily. IRG family.

The protein localises to the cell projection. It is found in the cilium. It localises to the flagellum. Its subcellular location is the lipid droplet. The catalysed reaction is GTP + H2O = GDP + phosphate + H(+). Required for sperm motility and therefore male fertility, via positive regulation of spermatozoa fibrous sheath formation. This is Interferon-inducible GTPase 5 (Irgc) from Rattus norvegicus (Rat).